The primary structure comprises 714 residues: WD repeat and coiled-coil-containing protein (714 aa).

2 WD repeats span residues 55-98 (GQFE…LEQN) and 154-194 (KGSG…LVPC). Disordered stretches follow at residues 432–454 (EEST…SENF) and 531–564 (QASR…KEKN). A coiled-coil region spans residues 567–595 (QLTQNMERIFTRFAEVQQCLSEIREFTQN). The tract at residues 685 to 714 (RSARRKSPARPPSGADDFPPESPKSPSMEK) is disordered.

This Danio rerio (Zebrafish) protein is WD repeat and coiled-coil-containing protein (wdcp).